Reading from the N-terminus, the 420-residue chain is WD repeat-containing protein 21 (420 aa).

The DDB-boX signature appears at arginine 73–phenylalanine 75. 3 WD repeats span residues glutamine 251–glutamine 289, histidine 293–arginine 332, and glycine 341–glutamate 383.

Its subcellular location is the cytoplasm. The protein resides in the nucleus. This chain is WD repeat-containing protein 21 (wdr21), found in Schizosaccharomyces pombe (strain 972 / ATCC 24843) (Fission yeast).